A 749-amino-acid chain; its full sequence is 5-methyltetrahydropteroyltriglutamate--homocysteine methyltransferase (749 aa).

Residues 18-21 (REWK) and K112 each bind 5-methyltetrahydropteroyltri-L-glutamate. L-homocysteine contacts are provided by residues 420–422 (IGS) and E473. L-methionine-binding positions include 420-422 (IGS) and E473. W550 provides a ligand contact to 5-methyltetrahydropteroyltri-L-glutamate. Position 588 (D588) interacts with L-homocysteine. L-methionine is bound at residue D588. Position 594 (E594) interacts with 5-methyltetrahydropteroyltri-L-glutamate. Residues H630, C632, and E654 each contribute to the Zn(2+) site. Catalysis depends on H683, which acts as the Proton donor. Position 715 (C715) interacts with Zn(2+).

It belongs to the vitamin-B12 independent methionine synthase family. Requires Zn(2+) as cofactor.

It catalyses the reaction 5-methyltetrahydropteroyltri-L-glutamate + L-homocysteine = tetrahydropteroyltri-L-glutamate + L-methionine. The protein operates within amino-acid biosynthesis; L-methionine biosynthesis via de novo pathway; L-methionine from L-homocysteine (MetE route): step 1/1. Its function is as follows. Catalyzes the transfer of a methyl group from 5-methyltetrahydrofolate to homocysteine resulting in methionine formation. This is 5-methyltetrahydropteroyltriglutamate--homocysteine methyltransferase from Staphylococcus haemolyticus (strain JCSC1435).